A 147-amino-acid chain; its full sequence is Hemoglobin subunit gamma (147 aa).

The region spanning 3-147 is the Globin domain; sequence NFTAEDKAAI…VASALASRYH (145 aa). Heme b contacts are provided by His64 and His93.

It belongs to the globin family. In terms of assembly, heterotetramer of two alpha chains and two gamma chains in fetal hemoglobin (Hb F). As to expression, red blood cells.

Functionally, gamma chains make up the fetal hemoglobin F, in combination with alpha chains. This chain is Hemoglobin subunit gamma (HBG), found in Alouatta belzebul (Red-handed howler monkey).